Reading from the N-terminus, the 444-residue chain is Methylenetetrahydrofolate--tRNA-(uracil-5-)-methyltransferase TrmFO (444 aa).

FAD is bound at residue 9–14; it reads GAGMAG.

It belongs to the MnmG family. TrmFO subfamily. FAD serves as cofactor.

Its subcellular location is the cytoplasm. It catalyses the reaction uridine(54) in tRNA + (6R)-5,10-methylene-5,6,7,8-tetrahydrofolate + NADH + H(+) = 5-methyluridine(54) in tRNA + (6S)-5,6,7,8-tetrahydrofolate + NAD(+). The catalysed reaction is uridine(54) in tRNA + (6R)-5,10-methylene-5,6,7,8-tetrahydrofolate + NADPH + H(+) = 5-methyluridine(54) in tRNA + (6S)-5,6,7,8-tetrahydrofolate + NADP(+). Its function is as follows. Catalyzes the folate-dependent formation of 5-methyl-uridine at position 54 (M-5-U54) in all tRNAs. The sequence is that of Methylenetetrahydrofolate--tRNA-(uracil-5-)-methyltransferase TrmFO from Cereibacter sphaeroides (strain ATCC 17025 / ATH 2.4.3) (Rhodobacter sphaeroides).